A 94-amino-acid polypeptide reads, in one-letter code: Small ribosomal subunit protein bS20c (94 aa).

It belongs to the bacterial ribosomal protein bS20 family.

It is found in the plastid. It localises to the chloroplast. Functionally, binds directly to 16S ribosomal RNA. The chain is Small ribosomal subunit protein bS20c from Porphyra purpurea (Red seaweed).